We begin with the raw amino-acid sequence, 477 residues long: 2-(3-amino-3-carboxypropyl)histidine synthase subunit 2 (477 aa).

Positions 88, 109, and 328 each coordinate [4Fe-4S] cluster.

The protein belongs to the DPH1/DPH2 family. DPH2 subfamily. Component of the 2-(3-amino-3-carboxypropyl)histidine synthase complex composed of DPH1, DPH2, DPH3 and a NADH-dependent reductase. [4Fe-4S] cluster is required as a cofactor.

It functions in the pathway protein modification; peptidyl-diphthamide biosynthesis. Required for the first step of diphthamide biosynthesis, a post-translational modification of histidine which occurs in elongation factor 2. DPH1 and DPH2 transfer a 3-amino-3-carboxypropyl (ACP) group from S-adenosyl-L-methionine (SAM) to a histidine residue, the reaction is assisted by a reduction system comprising DPH3 and a NADH-dependent reductase. Facilitates the reduction of the catalytic iron-sulfur cluster found in the DPH1 subunit. The polypeptide is 2-(3-amino-3-carboxypropyl)histidine synthase subunit 2 (DPH2) (Gallus gallus (Chicken)).